The following is a 124-amino-acid chain: Small ribosomal subunit protein uS12 (124 aa).

A disordered region spans residues Met1–Pro22. Asp89 bears the 3-methylthioaspartic acid mark. Residues Arg99–Lys124 form a disordered region. The segment covering Lys111–Lys124 has biased composition (basic residues).

It belongs to the universal ribosomal protein uS12 family. As to quaternary structure, part of the 30S ribosomal subunit. Contacts proteins S8 and S17. May interact with IF1 in the 30S initiation complex.

In terms of biological role, with S4 and S5 plays an important role in translational accuracy. Interacts with and stabilizes bases of the 16S rRNA that are involved in tRNA selection in the A site and with the mRNA backbone. Located at the interface of the 30S and 50S subunits, it traverses the body of the 30S subunit contacting proteins on the other side and probably holding the rRNA structure together. The combined cluster of proteins S8, S12 and S17 appears to hold together the shoulder and platform of the 30S subunit. This is Small ribosomal subunit protein uS12 from Marinomonas sp. (strain MWYL1).